Consider the following 204-residue polypeptide: Dephospho-CoA kinase (204 aa).

Residues 3-204 (VIGLTGGIGS…DRLDLAYRAH (202 aa)) form the DPCK domain. Position 11–16 (11–16 (GSGKSY)) interacts with ATP.

This sequence belongs to the CoaE family.

Its subcellular location is the cytoplasm. It carries out the reaction 3'-dephospho-CoA + ATP = ADP + CoA + H(+). It participates in cofactor biosynthesis; coenzyme A biosynthesis; CoA from (R)-pantothenate: step 5/5. Its function is as follows. Catalyzes the phosphorylation of the 3'-hydroxyl group of dephosphocoenzyme A to form coenzyme A. This chain is Dephospho-CoA kinase, found in Ralstonia nicotianae (strain ATCC BAA-1114 / GMI1000) (Ralstonia solanacearum).